Consider the following 1252-residue polypeptide: ATP-dependent helicase/nuclease subunit A (1252 aa).

One can recognise a UvrD-like helicase ATP-binding domain in the interval 6 to 489 (TNWTEEQKEA…VLLYKNFRSR (484 aa)). 27-34 (AAAGSGKT) is an ATP binding site. Residues 523-811 (ANYEEIEENL…RIMSIHKSKG (289 aa)) form the UvrD-like helicase C-terminal domain.

Belongs to the helicase family. AddA subfamily. In terms of assembly, heterodimer of AddA and AddB/RexB. It depends on Mg(2+) as a cofactor.

It catalyses the reaction Couples ATP hydrolysis with the unwinding of duplex DNA by translocating in the 3'-5' direction.. The catalysed reaction is ATP + H2O = ADP + phosphate + H(+). The heterodimer acts as both an ATP-dependent DNA helicase and an ATP-dependent, dual-direction single-stranded exonuclease. Recognizes the chi site generating a DNA molecule suitable for the initiation of homologous recombination. The AddA nuclease domain is required for chi fragment generation; this subunit has the helicase and 3' -&gt; 5' nuclease activities. The polypeptide is ATP-dependent helicase/nuclease subunit A (Clostridium acetobutylicum (strain ATCC 824 / DSM 792 / JCM 1419 / IAM 19013 / LMG 5710 / NBRC 13948 / NRRL B-527 / VKM B-1787 / 2291 / W)).